The sequence spans 186 residues: Hydra actinoporin-like toxin 1 (186 aa).

An N-terminal signal peptide occupies residues 1-18 (MLLYICLVNLLLPLSVGA). An N-terminal region region spans residues 29–48 (KVGVDAALQQIDDVWKGKTV). A Cell attachment site, crucial for protein stability motif is present at residues 158 to 160 (RAG).

The protein belongs to the actinoporin family. HALT subfamily. Octamer or nonamer in membranes. Monomer in the soluble state. In vitro, interacts with folate receptor alpha (of target organism). As to expression, expressed female germline during oogenesis.

It localises to the nematocyst. The protein resides in the secreted. The protein localises to the target cell membrane. In terms of biological role, pore-forming protein that forms hydrophilic pores and causes cytolysis. Compared to equinatoxin-2 (AC P61914), it reveals lower cytolysis activity (5-12-fold difference, tested on erythrocytes), a larger pore size (probably 2-3 nm) and different affinity to membrane lipids (100-fold lower affinity to sphingomyelin). Binds to sulfatides (SFT) as well as to the two sphingolipids, lysophosphatidic acid (LPA) and sphingosine-1-phosphate (S1P). It seems to bind more strongly to LPA than to S1P and SFT. Shows cytolytic activity on HeLa cells, with a different potency than its paralogs (from most potent to less potent: HALT-4&gt;HALT-6~HALT-1&gt;HALT-3&gt;HALT-7&gt;HALT-2). Pore formation is a multi-step process that involves specific recognition of membrane lipid by a protein aromatic residues rich region, firm binding to the membrane (mainly driven by hydrophobic interactions) accompanied by the transfer of the N-terminal region to the lipid-water interface and finally pore formation after oligomerization of monomers. In vitro, binds to the folate receptor alpha (FOLR1), a GPI-anchored membrane protein that plays a major role in the uptake of folate/folic acid into cells via endocytosis, suggesting a possible involvement of this receptor in the mechanism of HALT-1-induced cell lysis. In vivo, does not cause visible paralysis in larvae of the blowfly Sarcophaga faculata, the most common arthropod prey of Hydra. In Hydra vulgaris (Hydra), this protein is Hydra actinoporin-like toxin 1.